Consider the following 577-residue polypeptide: Steryl-sulfatase (577 aa).

A signal peptide spans 1–19 (MLWPCLLALLLSQLNFLCA). Residues 21–183 (RPGPGPNFLL…GTVFGSAQQV (163 aa)) lie on the Lumenal side of the membrane. The Ca(2+) site is built by aspartate 34 and aspartate 35. Asparagine 46 carries an N-linked (GlcNAc...) asparagine glycan. Cysteine 74 is a binding site for Ca(2+). The active-site Nucleophile is cysteine 74. Position 74 is a 3-oxoalanine (Cys) (cysteine 74). The active site involves histidine 135. Disulfide bonds link cysteine 140-cysteine 147 and cysteine 169-cysteine 241. A helical membrane pass occupies residues 184-207 (FVVLPMNILGAVLLAMALARWAGL). The Cytoplasmic portion of the chain corresponds to 208–211 (ARPP). The helical transmembrane segment at 212–233 (GWVFGVTVAAMAAVGGAYVAFL) threads the bilayer. Over 234-577 (YHFRPANCFL…PLACRCAGDG (344 aa)) the chain is Lumenal. Asparagine 332 carries N-linked (GlcNAc...) asparagine glycosylation. The Ca(2+) site is built by aspartate 341 and histidine 342. Cystine bridges form between cysteine 445–cysteine 488, cysteine 480–cysteine 486, and cysteine 561–cysteine 571. Residue asparagine 458 is glycosylated (N-linked (GlcNAc...) asparagine).

Belongs to the sulfatase family. Homodimer. Ca(2+) is required as a cofactor. In terms of processing, the conversion to 3-oxoalanine (also known as C-formylglycine, FGly), of a serine or cysteine residue in prokaryotes and of a cysteine residue in eukaryotes, is critical for catalytic activity.

It is found in the microsome membrane. Its subcellular location is the endoplasmic reticulum membrane. It catalyses the reaction dehydroepiandrosterone 3-sulfate + H2O = 3beta-hydroxyandrost-5-en-17-one + sulfate + H(+). The catalysed reaction is estrone 3-sulfate + H2O = estrone + sulfate + H(+). Catalyzes the conversion of sulfated steroid precursors, such as dehydroepiandrosterone sulfate (DHEA-S) and estrone sulfate to the free steroid. This chain is Steryl-sulfatase (Sts), found in Rattus norvegicus (Rat).